We begin with the raw amino-acid sequence, 213 residues long: Cytochrome c biogenesis ATP-binding export protein CcmA (213 aa).

The ABC transporter domain occupies 8 to 213 (LQATALTCER…RDIDLGQWAA (206 aa)). Residue 40–47 (GPNGSGKT) participates in ATP binding.

The protein belongs to the ABC transporter superfamily. CcmA exporter (TC 3.A.1.107) family. In terms of assembly, the complex is composed of two ATP-binding proteins (CcmA) and two transmembrane proteins (CcmB).

It localises to the cell inner membrane. It catalyses the reaction heme b(in) + ATP + H2O = heme b(out) + ADP + phosphate + H(+). In terms of biological role, part of the ABC transporter complex CcmAB involved in the biogenesis of c-type cytochromes; once thought to export heme, this seems not to be the case, but its exact role is uncertain. Responsible for energy coupling to the transport system. This Pseudomonas savastanoi pv. phaseolicola (strain 1448A / Race 6) (Pseudomonas syringae pv. phaseolicola (strain 1448A / Race 6)) protein is Cytochrome c biogenesis ATP-binding export protein CcmA.